The following is a 415-amino-acid chain: uncharacterized protein (415 aa).

The [4Fe-4S] cluster site is built by C85, C91, C94, and C175. Residues Q248, Y276, E297, and N344 each coordinate S-adenosyl-L-methionine. C371 (nucleophile) is an active-site residue.

Belongs to the class I-like SAM-binding methyltransferase superfamily. RNA M5U methyltransferase family.

This is an uncharacterized protein from Leptospira interrogans serogroup Icterohaemorrhagiae serovar copenhageni (strain Fiocruz L1-130).